The chain runs to 325 residues: Alkanal monooxygenase beta chain (325 aa).

Belongs to the bacterial luciferase oxidoreductase family. In terms of assembly, heterodimer of an alpha and a beta chain.

The enzyme catalyses a long-chain fatty aldehyde + FMNH2 + O2 = a long-chain fatty acid + hnu + FMN + H2O + 2 H(+). Its function is as follows. Light-emitting reaction in luminous bacteria. The specific role of the beta subunit is unknown, but it is absolutely required for bioluminescence activity. This Photobacterium leiognathi protein is Alkanal monooxygenase beta chain (luxB).